A 179-amino-acid chain; its full sequence is Phosphopantetheine adenylyltransferase (179 aa).

Ser23 is a binding site for substrate. Residues 23-24 (SF) and His31 contribute to the ATP site. 3 residues coordinate substrate: Lys55, Ala87, and Arg101. Residues 102–104 (GIR), Glu112, and 137–143 (FAHVSSS) contribute to the ATP site.

The protein belongs to the bacterial CoaD family. Homohexamer. Requires Mg(2+) as cofactor.

The protein resides in the cytoplasm. The catalysed reaction is (R)-4'-phosphopantetheine + ATP + H(+) = 3'-dephospho-CoA + diphosphate. It functions in the pathway cofactor biosynthesis; coenzyme A biosynthesis; CoA from (R)-pantothenate: step 4/5. Its function is as follows. Reversibly transfers an adenylyl group from ATP to 4'-phosphopantetheine, yielding dephospho-CoA (dPCoA) and pyrophosphate. This Rhodopirellula baltica (strain DSM 10527 / NCIMB 13988 / SH1) protein is Phosphopantetheine adenylyltransferase.